Here is a 569-residue protein sequence, read N- to C-terminus: Endo-1,4-beta-xylanase 5 (569 aa).

Residues 1-25 form the signal peptide; the sequence is MKNINNGFFLCMLLLLWCFVHSGIS. 3 N-linked (GlcNAc...) asparagine glycosylation sites follow: Asn-197, Asn-261, and Asn-307. The region spanning 209–500 is the GH10 domain; it reads EQTKPSFLLG…NTATGDVIDK (292 aa). The active-site Proton donor is Glu-332. Asn-346 carries an N-linked (GlcNAc...) asparagine glycan. The active-site Nucleophile is Glu-439. Residues Asn-490, Asn-536, and Asn-544 are each glycosylated (N-linked (GlcNAc...) asparagine).

Belongs to the glycosyl hydrolase 10 (cellulase F) family.

It carries out the reaction Endohydrolysis of (1-&gt;4)-beta-D-xylosidic linkages in xylans.. Its pathway is glycan degradation; xylan degradation. Functionally, binds to and hydrolyzes insoluble and soluble xylan substrates. This chain is Endo-1,4-beta-xylanase 5, found in Arabidopsis thaliana (Mouse-ear cress).